The primary structure comprises 336 residues: Eukaryotic translation initiation factor 3 subunit I (336 aa).

5 WD repeats span residues 8-47 (GHER…RLGT), 50-91 (GHLG…KVWE), 146-185 (CTES…QLEN), 190-229 (EFDH…ILKT), and 287-326 (GHFG…FDFM).

Belongs to the eIF-3 subunit I family. Component of the eukaryotic translation initiation factor 3 (eIF-3) complex.

It localises to the cytoplasm. Functionally, component of the eukaryotic translation initiation factor 3 (eIF-3) complex, which is involved in protein synthesis of a specialized repertoire of mRNAs and, together with other initiation factors, stimulates binding of mRNA and methionyl-tRNAi to the 40S ribosome. The eIF-3 complex specifically targets and initiates translation of a subset of mRNAs involved in cell proliferation. The sequence is that of Eukaryotic translation initiation factor 3 subunit I (tif34) from Emericella nidulans (strain FGSC A4 / ATCC 38163 / CBS 112.46 / NRRL 194 / M139) (Aspergillus nidulans).